A 499-amino-acid chain; its full sequence is UDP-N-acetylmuramoylalanine--D-glutamate ligase (499 aa).

Position 128 to 134 (128 to 134 (GTNGKTT)) interacts with ATP.

It belongs to the MurCDEF family.

It is found in the cytoplasm. It catalyses the reaction UDP-N-acetyl-alpha-D-muramoyl-L-alanine + D-glutamate + ATP = UDP-N-acetyl-alpha-D-muramoyl-L-alanyl-D-glutamate + ADP + phosphate + H(+). The protein operates within cell wall biogenesis; peptidoglycan biosynthesis. Functionally, cell wall formation. Catalyzes the addition of glutamate to the nucleotide precursor UDP-N-acetylmuramoyl-L-alanine (UMA). The chain is UDP-N-acetylmuramoylalanine--D-glutamate ligase from Rhodococcus jostii (strain RHA1).